The chain runs to 556 residues: Formate--tetrahydrofolate ligase (556 aa).

Residue 65-72 participates in ATP binding; the sequence is TPAGEGKS.

It belongs to the formate--tetrahydrofolate ligase family.

The catalysed reaction is (6S)-5,6,7,8-tetrahydrofolate + formate + ATP = (6R)-10-formyltetrahydrofolate + ADP + phosphate. Its pathway is one-carbon metabolism; tetrahydrofolate interconversion. This Streptococcus thermophilus (strain ATCC BAA-250 / LMG 18311) protein is Formate--tetrahydrofolate ligase.